Reading from the N-terminus, the 174-residue chain is Pediocin PA-1 biosynthesis protein PedC (174 aa).

Probably involved in pediocin PA-1 biosynthesis. This Pediococcus acidilactici protein is Pediocin PA-1 biosynthesis protein PedC (pedC).